A 354-amino-acid chain; its full sequence is Phospho-N-acetylmuramoyl-pentapeptide-transferase (354 aa).

A run of 10 helical transmembrane segments spans residues 27 to 47 (ATLL…INML), 73 to 93 (TMGG…WMDV), 97 to 117 (LVWA…LDDY), 138 to 158 (FVVA…YVPV), 162 to 182 (LYVP…VGAG), 193 to 213 (GLAI…AYLA), 230 to 250 (AGEL…FLWF), 256 to 276 (AVFM…VIAV), 282 to 302 (IVLA…IVQV), and 331 to 351 (TVVI…LATL).

It belongs to the glycosyltransferase 4 family. MraY subfamily. Requires Mg(2+) as cofactor.

Its subcellular location is the cell inner membrane. The enzyme catalyses UDP-N-acetyl-alpha-D-muramoyl-L-alanyl-gamma-D-glutamyl-meso-2,6-diaminopimeloyl-D-alanyl-D-alanine + di-trans,octa-cis-undecaprenyl phosphate = di-trans,octa-cis-undecaprenyl diphospho-N-acetyl-alpha-D-muramoyl-L-alanyl-D-glutamyl-meso-2,6-diaminopimeloyl-D-alanyl-D-alanine + UMP. The protein operates within cell wall biogenesis; peptidoglycan biosynthesis. Catalyzes the initial step of the lipid cycle reactions in the biosynthesis of the cell wall peptidoglycan: transfers peptidoglycan precursor phospho-MurNAc-pentapeptide from UDP-MurNAc-pentapeptide onto the lipid carrier undecaprenyl phosphate, yielding undecaprenyl-pyrophosphoryl-MurNAc-pentapeptide, known as lipid I. The sequence is that of Phospho-N-acetylmuramoyl-pentapeptide-transferase from Novosphingobium aromaticivorans (strain ATCC 700278 / DSM 12444 / CCUG 56034 / CIP 105152 / NBRC 16084 / F199).